Reading from the N-terminus, the 394-residue chain is 3-hydroxybenzoate 6-hydroxylase 1 (394 aa).

The protein belongs to the 3-hydroxybenzoate 6-hydroxylase family. In terms of assembly, homotrimer. The cofactor is FAD.

It carries out the reaction 3-hydroxybenzoate + NADH + O2 + H(+) = 2,5-dihydroxybenzoate + NAD(+) + H2O. With respect to regulation, inhibited by manganese, copper, mercury, and iron ions. In terms of biological role, catalyzes the NAD- or NADP-dependent conversion of 3-hydroxybenzoate to gentisate. The affinity of the enzyme toward NAD is twice as high as for NADP. The enzyme shows higher specific activities against the intermediates in the degradation of 2,5-xylenol and 3,5-xylenol, 3-hydroxy-4-methylbenzoate and 3-hydroxy-5-methylbenzoate, respectively, than for 3-hydroxybenzoate. It also shows activity against 3-substituted benzoates. This Aquipseudomonas alcaligenes (Pseudomonas alcaligenes) protein is 3-hydroxybenzoate 6-hydroxylase 1 (xlnD).